Reading from the N-terminus, the 246-residue chain is tRNA (guanine-N(7)-)-methyltransferase (246 aa).

Residues 1-26 (MSDSSSSSENAPATPESPGRPPRGIK) form a disordered region. Residues glutamate 74, glutamate 99, aspartate 126, and aspartate 149 each coordinate S-adenosyl-L-methionine. Aspartate 149 is an active-site residue. Residues lysine 153, aspartate 185, and 224-227 (TKFE) each bind substrate.

Belongs to the class I-like SAM-binding methyltransferase superfamily. TrmB family.

The enzyme catalyses guanosine(46) in tRNA + S-adenosyl-L-methionine = N(7)-methylguanosine(46) in tRNA + S-adenosyl-L-homocysteine. It functions in the pathway tRNA modification; N(7)-methylguanine-tRNA biosynthesis. Functionally, catalyzes the formation of N(7)-methylguanine at position 46 (m7G46) in tRNA. This is tRNA (guanine-N(7)-)-methyltransferase from Chromohalobacter salexigens (strain ATCC BAA-138 / DSM 3043 / CIP 106854 / NCIMB 13768 / 1H11).